Consider the following 331-residue polypeptide: DNA double-strand break repair nuclease NurA (331 aa).

The Mn(2+) site is built by Asp-56 and Asp-131.

The protein belongs to the NurA family. Homodimer. Interacts with SSB. Requires Mn(2+) as cofactor.

With respect to regulation, the 5'-3' ssDNA and dsDNA exonuclease and ssDNA endonuclease activities are inhibited by SSB (single-stranded DNA-binding protein). Its function is as follows. Involved in DNA double-strand break (DSB) repair. Probably acts with HerA to stimulate resection of the 5' strand and produce the long 3' single-strand that is required for RadA loading. Exhibits both single-stranded endonuclease activity and 5'-3' exonuclease activity on single-stranded and double-stranded DNA. The polypeptide is DNA double-strand break repair nuclease NurA (Sulfurisphaera tokodaii (strain DSM 16993 / JCM 10545 / NBRC 100140 / 7) (Sulfolobus tokodaii)).